The primary structure comprises 53 residues: Large ribosomal subunit protein bL33A (53 aa).

The protein belongs to the bacterial ribosomal protein bL33 family.

The polypeptide is Large ribosomal subunit protein bL33A (Mycoplasmoides gallisepticum (strain R(low / passage 15 / clone 2)) (Mycoplasma gallisepticum)).